The following is a 116-amino-acid chain: uncharacterized protein (116 aa).

The next 3 helical transmembrane spans lie at 5–27 (AILLSLAGIADSSYLLLSEAVPC), 42–64 (PFVPALLGLCWFVLSIVVFTAGV), and 88–110 (VLHGYFCPYCFTAYGIGIVVVAI).

The protein resides in the cell membrane. This is an uncharacterized protein from Archaeoglobus fulgidus (strain ATCC 49558 / DSM 4304 / JCM 9628 / NBRC 100126 / VC-16).